Reading from the N-terminus, the 535-residue chain is CTP synthase (535 aa).

An amidoligase domain region spans residues 1–267; it reads MTKYIFVTGG…DQIVCDHLKL (267 aa). Residue serine 13 coordinates CTP. Serine 13 is a binding site for UTP. 14-19 is an ATP binding site; it reads SLGKGI. Tyrosine 54 is an L-glutamine binding site. Residue aspartate 71 participates in ATP binding. 2 residues coordinate Mg(2+): aspartate 71 and glutamate 141. Residues 148 to 150, 188 to 193, and lysine 224 contribute to the CTP site; these read DIE and KTKPTQ. Residues 188 to 193 and lysine 224 contribute to the UTP site; that span reads KTKPTQ. 240–242 is a binding site for ATP; the sequence is RDA. Residues 292-534 enclose the Glutamine amidotransferase type-1 domain; that stretch reads KIALVGKYVE…VRASITNKES (243 aa). L-glutamine is bound at residue glycine 354. The Nucleophile; for glutamine hydrolysis role is filled by cysteine 381. L-glutamine contacts are provided by residues 382–385, glutamate 405, and arginine 462; that span reads LGMQ. Active-site residues include histidine 507 and glutamate 509.

This sequence belongs to the CTP synthase family. Homotetramer.

It carries out the reaction UTP + L-glutamine + ATP + H2O = CTP + L-glutamate + ADP + phosphate + 2 H(+). It catalyses the reaction L-glutamine + H2O = L-glutamate + NH4(+). The catalysed reaction is UTP + NH4(+) + ATP = CTP + ADP + phosphate + 2 H(+). It participates in pyrimidine metabolism; CTP biosynthesis via de novo pathway; CTP from UDP: step 2/2. Allosterically activated by GTP, when glutamine is the substrate; GTP has no effect on the reaction when ammonia is the substrate. The allosteric effector GTP functions by stabilizing the protein conformation that binds the tetrahedral intermediate(s) formed during glutamine hydrolysis. Inhibited by the product CTP, via allosteric rather than competitive inhibition. Functionally, catalyzes the ATP-dependent amination of UTP to CTP with either L-glutamine or ammonia as the source of nitrogen. Regulates intracellular CTP levels through interactions with the four ribonucleotide triphosphates. The protein is CTP synthase of Bacillus cereus (strain AH187).